Reading from the N-terminus, the 183-residue chain is Capsid protein (183 aa).

The interval 136-183 is disordered; sequence NAPILSTLPETTVVRRRGRSPRRRTPSPRRRRSQSPRRRRSQSRESQC. A compositionally biased stretch (basic residues) spans 149 to 176; the sequence is VRRRGRSPRRRTPSPRRRRSQSPRRRRS. A phosphoserine; by host mark is found at Ser-155, Ser-162, and Ser-170. A 1; half-length repeat occupies 155 to 161; it reads SPRRRTP. Residues 155–177 form a 3 X 8 AA repeats of S-P-R-R-R-[PR]-S-Q region; it reads SPRRRTPSPRRRRSQSPRRRRSQ. Positions 158 to 175 match the Bipartite nuclear localization signal motif; that stretch reads RRTPSPRRRRSQSPRRRR. 2 repeat units span residues 162–169 and 170–177. The segment at 177–183 is RNA binding; that stretch reads QSRESQC.

Belongs to the orthohepadnavirus core antigen family. In terms of assembly, homodimerizes, then multimerizes. Interacts with cytosol exposed regions of viral L glycoprotein present in the reticulum-to-Golgi compartment. Interacts with human FLNB. Phosphorylated form interacts with host importin alpha; this interaction depends on the exposure of the NLS, which itself depends upon genome maturation and/or phosphorylation of the capsid protein. Interacts with host NUP153. In terms of processing, phosphorylated by host SRPK1, SRPK2, and maybe protein kinase C or GAPDH. Phosphorylation is critical for pregenomic RNA packaging. Protein kinase C phosphorylation is stimulated by HBx protein and may play a role in transport of the viral genome to the nucleus at the late step during the viral replication cycle.

Its subcellular location is the virion. The protein localises to the host cytoplasm. In terms of biological role, self assembles to form an icosahedral capsid. Most capsids appear to be large particles with an icosahedral symmetry of T=4 and consist of 240 copies of capsid protein, though a fraction forms smaller T=3 particles consisting of 180 capsid proteins. Entering capsids are transported along microtubules to the nucleus. Phosphorylation of the capsid is thought to induce exposure of nuclear localization signal in the C-terminal portion of the capsid protein that allows binding to the nuclear pore complex via the importin (karyopherin-) alpha and beta. Capsids are imported in intact form through the nuclear pore into the nuclear basket, where it probably binds NUP153. Only capsids that contain the mature viral genome can release the viral DNA and capsid protein into the nucleoplasm. Immature capsids get stuck in the basket. Capsids encapsulate the pre-genomic RNA and the P protein. Pre-genomic RNA is reverse-transcribed into DNA while the capsid is still in the cytoplasm. The capsid can then either be directed to the nucleus, providing more genomes for transcription, or bud through the endoplasmic reticulum to provide new virions. The protein is Capsid protein of Homo sapiens (Human).